We begin with the raw amino-acid sequence, 236 residues long: Ribose-5-phosphate isomerase A (236 aa).

Substrate contacts are provided by residues 32 to 35, 87 to 90, and 100 to 103; these read TGST, DGSD, and KGGG. The active-site Proton acceptor is the glutamate 109. Substrate is bound at residue lysine 127.

This sequence belongs to the ribose 5-phosphate isomerase family. As to quaternary structure, homodimer.

It carries out the reaction aldehydo-D-ribose 5-phosphate = D-ribulose 5-phosphate. Its pathway is carbohydrate degradation; pentose phosphate pathway; D-ribose 5-phosphate from D-ribulose 5-phosphate (non-oxidative stage): step 1/1. Functionally, catalyzes the reversible conversion of ribose-5-phosphate to ribulose 5-phosphate. The polypeptide is Ribose-5-phosphate isomerase A (Haloquadratum walsbyi (strain DSM 16790 / HBSQ001)).